Here is a 444-residue protein sequence, read N- to C-terminus: MKKLNADDYIDILNDVLKDICPTDSEKEELKIFSDKIISKIKDISKYPVLDIIQVGSTARDANLKNDHDIDIFLRFEKETDRDMLKELGLKLGKDVINYFNGKSWIEYAEHPYVSGEIGKFNLDIVPCYDIENCEKIISAVDRTPLHNEFLLNAYENNDLSNDIRLLKKFLKGLGIYGSDLKTAGFSGYLCELLILKYRGFLNLLSAVQTWKPKHSIVLDEIYEMYDLKKDHDFLKFNDSLVVYDPVDLNRNVAAALNKENLCKFIFYSKMFLKKPSKEFFYGFYKKTTDLLNQRKRGYLITLEILRPENIVEDVIYPQMEKIQKSINKLVKEHDFEYLQYQNFADDNTCYLSWEFLIHELPDVKLRIGPPVYSEQGVLNFITHNEHYFVKECNVCAYKTRKYKNIQILFEDIVNGKLKNIITYPKYVCPENAKIRLGTFIERK.

The ATP site is built by Ser-57 and Arg-60. 2 residues coordinate CTP: Ser-57 and Arg-60. Asp-69, Asp-71, and Asp-124 together coordinate Mg(2+). His-147, Lys-168, and Tyr-177 together coordinate ATP. CTP contacts are provided by His-147, Lys-168, and Tyr-177.

This sequence belongs to the tRNA nucleotidyltransferase/poly(A) polymerase family. Archaeal CCA-adding enzyme subfamily. In terms of assembly, homodimer. Mg(2+) serves as cofactor.

It catalyses the reaction a tRNA precursor + 2 CTP + ATP = a tRNA with a 3' CCA end + 3 diphosphate. The catalysed reaction is a tRNA with a 3' CCA end + 2 CTP + ATP = a tRNA with a 3' CCACCA end + 3 diphosphate. In terms of biological role, catalyzes the addition and repair of the essential 3'-terminal CCA sequence in tRNAs without using a nucleic acid template. Adds these three nucleotides in the order of C, C, and A to the tRNA nucleotide-73, using CTP and ATP as substrates and producing inorganic pyrophosphate. tRNA 3'-terminal CCA addition is required both for tRNA processing and repair. Also involved in tRNA surveillance by mediating tandem CCA addition to generate a CCACCA at the 3' terminus of unstable tRNAs. While stable tRNAs receive only 3'-terminal CCA, unstable tRNAs are marked with CCACCA and rapidly degraded. The sequence is that of CCA-adding enzyme from Methanococcus maripaludis (strain DSM 14266 / JCM 13030 / NBRC 101832 / S2 / LL).